The chain runs to 179 residues: Probable chorismate pyruvate-lyase (179 aa).

Substrate is bound by residues arginine 82, leucine 120, and glutamate 165.

This sequence belongs to the UbiC family.

It localises to the cytoplasm. The catalysed reaction is chorismate = 4-hydroxybenzoate + pyruvate. Its pathway is cofactor biosynthesis; ubiquinone biosynthesis. Functionally, removes the pyruvyl group from chorismate, with concomitant aromatization of the ring, to provide 4-hydroxybenzoate (4HB) for the ubiquinone pathway. The protein is Probable chorismate pyruvate-lyase of Vibrio vulnificus (strain YJ016).